A 43-amino-acid polypeptide reads, in one-letter code: Neurotrophin-3 (43 aa).

It belongs to the NGF-beta family.

It is found in the secreted. Functionally, seems to promote the survival of visceral and proprioceptive sensory neurons. The protein is Neurotrophin-3 (ntf3) of Raja clavata (Thornback ray).